The sequence spans 220 residues: Inner membrane-spanning protein YciB (220 aa).

A run of 6 helical transmembrane segments spans residues 20–40, 57–77, 86–106, 123–143, 156–176, and 187–207; these read EVPP…FFFA, IGAP…IALA, LPIM…LTLW, LFGG…GYVF, KLTL…EIVW, and FKVW…MPLI.

Belongs to the YciB family.

It is found in the cell inner membrane. In terms of biological role, plays a role in cell envelope biogenesis, maintenance of cell envelope integrity and membrane homeostasis. The sequence is that of Inner membrane-spanning protein YciB from Brucella abortus (strain S19).